The primary structure comprises 181 residues: Isopentenyl-diphosphate Delta-isomerase (181 aa).

Positions 25 and 32 each coordinate Mn(2+). One can recognise a Nudix hydrolase domain in the interval 30 to 164 (LLHLAFSCWL…PWAFSPWMVL (135 aa)). Residue cysteine 67 is part of the active site. Residue histidine 69 participates in Mn(2+) binding. Glutamate 87 contacts Mg(2+). Mn(2+) is bound by residues glutamate 114 and glutamate 116. Residue glutamate 116 is part of the active site.

It belongs to the IPP isomerase type 1 family. In terms of assembly, homodimer. Requires Mg(2+) as cofactor. The cofactor is Mn(2+).

The protein localises to the cytoplasm. It catalyses the reaction isopentenyl diphosphate = dimethylallyl diphosphate. It functions in the pathway isoprenoid biosynthesis; dimethylallyl diphosphate biosynthesis; dimethylallyl diphosphate from isopentenyl diphosphate: step 1/1. In terms of biological role, catalyzes the 1,3-allylic rearrangement of the homoallylic substrate isopentenyl (IPP) to its highly electrophilic allylic isomer, dimethylallyl diphosphate (DMAPP). The chain is Isopentenyl-diphosphate Delta-isomerase from Citrobacter koseri (strain ATCC BAA-895 / CDC 4225-83 / SGSC4696).